We begin with the raw amino-acid sequence, 637 residues long: Acyl-CoA ligase cm3C (637 aa).

ATP-binding positions include 282 to 290 (TSGTSGRQK), 423 to 428 (HAWGLT), Asp-507, Arg-526, and Lys-624. The tract at residues 353–423 (DMQRMLGSVA…SLQPSWEFLH (71 aa)) is SBD1. The segment at 424–486 (AWGLTETCIV…YKAPNMFVGY (63 aa)) is SBD2.

This sequence belongs to the ATP-dependent AMP-binding enzyme family.

It participates in secondary metabolite biosynthesis. Functionally, acyl-CoA ligase; part of the gene cluster that mediates the biosynthesis of beauveriolides I and III, cyclodepsipeptides acting as inhibitors of the acyl-CoA:cholesterol acyltransferase. The HR-PKS cm3B initiates the biosynthesis of beauveriolides by iteratively catalyzing the formation of the linear polyketide chain. The ATP-dependent acetyl-CoA ligase cm3D converts the polyketide carboxylic acid to a CoA thioester which id shuttled to the first T domain in the NRPS cm3A by the acetyltransferase cm3C. Cm3A contains 13 domains and assembles the polyketide chain, L-phenylalanine, L-alanine, and D-leucine (or D-allo-isoleucine) to form beauveriolide I (or beauveriolide III). The production of both beauveriolides I and III suggests the substrate adaptability of cm3B, using different amino acids as substrates. This is Acyl-CoA ligase cm3C from Cordyceps militaris (strain CM01) (Caterpillar fungus).